Reading from the N-terminus, the 219-residue chain is Small ribosomal subunit protein uS3c (219 aa).

In terms of domain architecture, KH type-2 spans valine 47 to glutamate 119.

It belongs to the universal ribosomal protein uS3 family. As to quaternary structure, part of the 30S ribosomal subunit.

The protein resides in the plastid. Its subcellular location is the chloroplast. This Staurastrum punctulatum (Green alga) protein is Small ribosomal subunit protein uS3c (rps3).